A 322-amino-acid polypeptide reads, in one-letter code: Probable uridine nucleosidase 2 (322 aa).

Residues Asp-14 and His-246 contribute to the active site.

It belongs to the IUNH family. Component of the NSH heterocomplex made of URH1/NSH1 and URH2/NSH2 which exhibits strong xanthosine nucleosidase activity. Interacts with URH1. In terms of tissue distribution, expressed in roots, seedlings and flowers.

The protein resides in the cytoplasm. It localises to the cytosol. It catalyses the reaction uridine + H2O = D-ribose + uracil. The enzyme catalyses inosine + H2O = hypoxanthine + D-ribose. The catalysed reaction is xanthosine + H2O = D-ribose + xanthine. In terms of biological role, involved in pyrimidine breakdown, especially in response to dark stress. In the presence of URH1, exhibits efficient inosine and xanthosine hydrolytic activities. Support inosine breakdown especially during the late phase of senescence. In Arabidopsis thaliana (Mouse-ear cress), this protein is Probable uridine nucleosidase 2.